Reading from the N-terminus, the 221-residue chain is GTP cyclohydrolase III (221 aa).

It belongs to the archaeal-type GTP cyclohydrolase family.

The enzyme catalyses GTP + 3 H2O = 2-amino-5-formylamino-6-(5-phospho-D-ribosylamino)pyrimidin-4(3H)-one + 2 phosphate + 2 H(+). Its function is as follows. Catalyzes the formation of 2-amino-5-formylamino-6-ribofuranosylamino-4(3H)-pyrimidinone ribonucleotide monophosphate and inorganic phosphate from GTP. Also has an independent pyrophosphate phosphohydrolase activity. The sequence is that of GTP cyclohydrolase III from Pyrobaculum neutrophilum (strain DSM 2338 / JCM 9278 / NBRC 100436 / V24Sta) (Thermoproteus neutrophilus).